The primary structure comprises 111 residues: Large ribosomal subunit protein uL22 (111 aa).

It belongs to the universal ribosomal protein uL22 family. Part of the 50S ribosomal subunit.

Functionally, this protein binds specifically to 23S rRNA; its binding is stimulated by other ribosomal proteins, e.g. L4, L17, and L20. It is important during the early stages of 50S assembly. It makes multiple contacts with different domains of the 23S rRNA in the assembled 50S subunit and ribosome. In terms of biological role, the globular domain of the protein is located near the polypeptide exit tunnel on the outside of the subunit, while an extended beta-hairpin is found that lines the wall of the exit tunnel in the center of the 70S ribosome. In Francisella tularensis subsp. tularensis (strain FSC 198), this protein is Large ribosomal subunit protein uL22.